Consider the following 142-residue polypeptide: Heat shock protein HSP.16.4 (142 aa).

The region spanning 27–142 is the sHSP domain; that stretch reads NLFNDLKSNL…KEIKTSIPIE (116 aa).

It belongs to the small heat shock protein (HSP20) family.

The protein resides in the cytoplasm. The chain is Heat shock protein HSP.16.4 from Streptococcus thermophilus.